A 254-amino-acid chain; its full sequence is Ribosomal RNA small subunit methyltransferase J (254 aa).

Residues 107 to 108, 123 to 124, and Asp-174 contribute to the S-adenosyl-L-methionine site; these read RD and ER.

Belongs to the methyltransferase superfamily. RsmJ family.

It localises to the cytoplasm. It carries out the reaction guanosine(1516) in 16S rRNA + S-adenosyl-L-methionine = N(2)-methylguanosine(1516) in 16S rRNA + S-adenosyl-L-homocysteine + H(+). Specifically methylates the guanosine in position 1516 of 16S rRNA. The protein is Ribosomal RNA small subunit methyltransferase J of Coxiella burnetii (strain Dugway 5J108-111).